A 185-amino-acid chain; its full sequence is MVKLGNNFAEKGTKQPLLEDGFDTIPLMTPLDVNQLQFPPPDKVVVKTKTEYEPDRKKGKARPPKIAEFTVSITEGVTERFKVSVLVLFALAFLTCVVFLVVYKVYKYDRACPDGFVLKNTQCIPEGLESYYTEQDSSAREKFYTVINHYNLAKQSITRSVSPWMSVLSEEKLSEQETEAAEKSA.

The Cytoplasmic segment spans residues 1 to 82 (MVKLGNNFAE…ITEGVTERFK (82 aa)). A helical; Signal-anchor for type II membrane protein transmembrane segment spans residues 83–103 (VSVLVLFALAFLTCVVFLVVY). At 104 to 185 (KVYKYDRACP…QETEAAEKSA (82 aa)) the chain is on the lumenal side. Positions 129–164 (ESYYTEQDSSAREKFYTVINHYNLAKQSITRSVSPW) are required for GRIP1 interaction.

The protein belongs to the NSG family. As to quaternary structure, forms a complex with GRIP1, GRIA2 and STX12; controls the intracellular fate of AMPAR and the endosomal sorting of the GRIA2 subunit toward recycling and membrane targeting. Interacts with GRIP1. Interacts with STX12. Interacts with APP; could regulate APP processing. Interacts with FAM171A1. In terms of tissue distribution, widely expressed in brain and spinal cord. Expressed in neurons during maturation and synapse formation.

The protein resides in the membrane. It localises to the golgi apparatus. Its subcellular location is the trans-Golgi network membrane. The protein localises to the endosome membrane. It is found in the cell projection. The protein resides in the dendrite. It localises to the early endosome membrane. Its subcellular location is the late endosome membrane. The protein localises to the lysosome lumen. It is found in the recycling endosome membrane. The protein resides in the cytoplasmic vesicle membrane. It localises to the golgi stack membrane. Its subcellular location is the endosome. The protein localises to the multivesicular body membrane. It is found in the endoplasmic reticulum membrane. Its function is as follows. Plays a role in the recycling mechanism in neurons of multiple receptors, including AMPAR, APP and L1CAM and acts at the level of early endosomes to promote sorting of receptors toward a recycling pathway. Regulates sorting and recycling of GRIA2 through interaction with GRIP1 and then contributes to the regulation of synaptic transmission and plasticity by affecting the recycling and targeting of AMPA receptors to the synapse. Is required for faithful sorting of L1CAM to axons by facilitating trafficking from somatodendritic early endosome or the recycling endosome. In an other hand, induces apoptosis via the activation of CASP3 in response to DNA damage. The protein is Neuronal vesicle trafficking-associated protein 1 of Rattus norvegicus (Rat).